A 135-amino-acid chain; its full sequence is UPF0102 protein Mjls_1965 (135 aa).

It belongs to the UPF0102 family.

This is UPF0102 protein Mjls_1965 from Mycobacterium sp. (strain JLS).